Reading from the N-terminus, the 119-residue chain is Large ribosomal subunit protein eL31 (119 aa).

Belongs to the eukaryotic ribosomal protein eL31 family.

The chain is Large ribosomal subunit protein eL31 (RPL31) from Cyanophora paradoxa.